Consider the following 546-residue polypeptide: CTP synthase (546 aa).

Residues 1–265 (MTKYVFVTGG…DEIVCHKLNI (265 aa)) form an amidoligase domain region. S13 provides a ligand contact to CTP. S13 contributes to the UTP binding site. ATP contacts are provided by residues 14–19 (SLGKGI) and D71. Mg(2+) is bound by residues D71 and E139. Residues 146 to 148 (DIE), 186 to 191 (KTKPTQ), and K222 contribute to the CTP site. Residues 186–191 (KTKPTQ) and K222 each bind UTP. Positions 290–543 (NIAFVGKYVD…VRAALAHQQK (254 aa)) constitute a Glutamine amidotransferase type-1 domain. G351 contributes to the L-glutamine binding site. Catalysis depends on C378, which acts as the Nucleophile; for glutamine hydrolysis. L-glutamine-binding positions include 379 to 382 (LGMQ), E402, and R469. Catalysis depends on residues H516 and E518.

The protein belongs to the CTP synthase family. In terms of assembly, homotetramer.

The enzyme catalyses UTP + L-glutamine + ATP + H2O = CTP + L-glutamate + ADP + phosphate + 2 H(+). It carries out the reaction L-glutamine + H2O = L-glutamate + NH4(+). The catalysed reaction is UTP + NH4(+) + ATP = CTP + ADP + phosphate + 2 H(+). It participates in pyrimidine metabolism; CTP biosynthesis via de novo pathway; CTP from UDP: step 2/2. Its activity is regulated as follows. Allosterically activated by GTP, when glutamine is the substrate; GTP has no effect on the reaction when ammonia is the substrate. The allosteric effector GTP functions by stabilizing the protein conformation that binds the tetrahedral intermediate(s) formed during glutamine hydrolysis. Inhibited by the product CTP, via allosteric rather than competitive inhibition. Catalyzes the ATP-dependent amination of UTP to CTP with either L-glutamine or ammonia as the source of nitrogen. Regulates intracellular CTP levels through interactions with the four ribonucleotide triphosphates. The sequence is that of CTP synthase from Thiobacillus denitrificans (strain ATCC 25259 / T1).